The chain runs to 241 residues: Carboxysome assembly protein CcmN (241 aa).

Positions 123-206 (GASSPTTDSV…PTAPTVVTTA (84 aa)) are disordered. The span at 185–195 (QISSNRSPGES) shows a compositional bias: polar residues. The span at 196 to 206 (TPTAPTVVTTA) shows a compositional bias: low complexity. The short motif at 219 to 241 (VVGQVYINQLLLTLFPERRYFSS) is the Encapsulation peptide element.

This sequence belongs to the CcmN family. As to quaternary structure, interacts with full-length and the N-terminal 249 residues of CcmM; a probable CcmM-CcaA-CcmN complex can also be isolated. Interacts with CcmK.

Its subcellular location is the carboxysome. In terms of biological role, required for carboxysome formation; the N-terminus interacts with CcmM which itself binds RuBisCO (ribulose bisphosphate carboxylase, rbcL-rbcS). May also contact shell protein CcmK to help assemble the carboxysome. Beta-carboxysome assembly initiates when soluble RuBisCO is condensed into a liquid matrix in a pre-carboxysome by the RbcS-like domains of probably both forms of CcmM. CcmN interacts with the N-terminus of full-length CcmM, and then recruits the CcmK major shell protein via CcmN's encapsulation peptide. Shell formation requires CcmK proteins and CcmO. CcmL caps the otherwise elongated carboxysome. Once fully encapsulated carboxysomes are formed, they migrate within the cell probably via interactions with the cytoskeleton. In Synechocystis sp. (strain ATCC 27184 / PCC 6803 / Kazusa), this protein is Carboxysome assembly protein CcmN.